The sequence spans 491 residues: Maintenance of mitochondrial morphology protein 1 (491 aa).

Residues 1-22 (MTFQQNEPSAVPAQSSLSFTQG) lie on the Lumenal side of the membrane. The helical transmembrane segment at 23–43 (FLLGQLSVVLLIGAFIKFFIF) threads the bilayer. The Cytoplasmic portion of the chain corresponds to 44–491 (GEAPPPPSRG…GTLPGGAAAN (448 aa)). 3 disordered regions span residues 50-95 (PSRG…PVPS), 275-325 (PPLH…SPKS), and 392-491 (RTGV…AAAN). Positions 54–64 (LSHRASTHRRS) are enriched in basic residues. 2 stretches are compositionally biased toward polar residues: residues 65–78 (NSIYTINPNEGTSR) and 85–95 (STSNVLRPVPS). In terms of domain architecture, SMP-LTD spans 131–384 (QPESLDWFNV…EPRVQVVGLP (254 aa)). A compositionally biased stretch (pro residues) spans 275-287 (PPLHTPSPSPSPP). Composition is skewed to polar residues over residues 300–315 (TNGSREPTQEAPNAQE) and 403–412 (TGSNAASRSA). The segment covering 422-434 (RADDIGREPDGLR) has biased composition (basic and acidic residues).

Belongs to the MMM1 family. Homodimer. Component of the ER-mitochondria encounter structure (ERMES) or MDM complex, composed of mmm1, mdm10, mdm12 and mdm34. A mmm1 homodimer associates with one molecule of mdm12 on each side in a pairwise head-to-tail manner, and the SMP-LTD domains of mmm1 and mdm12 generate a continuous hydrophobic tunnel for phospholipid trafficking.

Its subcellular location is the endoplasmic reticulum membrane. Its function is as follows. Component of the ERMES/MDM complex, which serves as a molecular tether to connect the endoplasmic reticulum (ER) and mitochondria. Components of this complex are involved in the control of mitochondrial shape and protein biogenesis, and function in nonvesicular lipid trafficking between the ER and mitochondria. The mdm12-mmm1 subcomplex functions in the major beta-barrel assembly pathway that is responsible for biogenesis of all outer membrane beta-barrel proteins, and acts in a late step after the SAM complex. The mdm10-mdm12-mmm1 subcomplex further acts in the TOM40-specific pathway after the action of the mdm12-mmm1 complex. Essential for establishing and maintaining the structure of mitochondria and maintenance of mtDNA nucleoids. The polypeptide is Maintenance of mitochondrial morphology protein 1 (Aspergillus flavus (strain ATCC 200026 / FGSC A1120 / IAM 13836 / NRRL 3357 / JCM 12722 / SRRC 167)).